The primary structure comprises 233 residues: Purine nucleoside phosphorylase DeoD-type (233 aa).

His-4 provides a ligand contact to a purine D-ribonucleoside. Phosphate is bound by residues Gly-20, Arg-24, Arg-43, and 87-90 (RIGT). A purine D-ribonucleoside contacts are provided by residues 179–181 (EME) and 203–204 (SD). Asp-204 serves as the catalytic Proton donor.

The protein belongs to the PNP/UDP phosphorylase family. Homohexamer; trimer of homodimers.

It carries out the reaction a purine D-ribonucleoside + phosphate = a purine nucleobase + alpha-D-ribose 1-phosphate. It catalyses the reaction a purine 2'-deoxy-D-ribonucleoside + phosphate = a purine nucleobase + 2-deoxy-alpha-D-ribose 1-phosphate. Catalyzes the reversible phosphorolytic breakdown of the N-glycosidic bond in the beta-(deoxy)ribonucleoside molecules, with the formation of the corresponding free purine bases and pentose-1-phosphate. The sequence is that of Purine nucleoside phosphorylase DeoD-type from Helicobacter pylori (strain G27).